A 916-amino-acid polypeptide reads, in one-letter code: Protein translocase subunit SecA (916 aa).

Residues Gln88, 106–110 (GEGKT), and Asp519 contribute to the ATP site. Zn(2+) is bound by residues Cys902, Cys904, Cys913, and Cys914.

The protein belongs to the SecA family. In terms of assembly, monomer and homodimer. Part of the essential Sec protein translocation apparatus which comprises SecA, SecYEG and auxiliary proteins SecDF. Other proteins may also be involved. Zn(2+) serves as cofactor.

It localises to the cell inner membrane. Its subcellular location is the cytoplasm. The catalysed reaction is ATP + H2O + cellular proteinSide 1 = ADP + phosphate + cellular proteinSide 2.. Functionally, part of the Sec protein translocase complex. Interacts with the SecYEG preprotein conducting channel. Has a central role in coupling the hydrolysis of ATP to the transfer of proteins into and across the cell membrane, serving as an ATP-driven molecular motor driving the stepwise translocation of polypeptide chains across the membrane. The protein is Protein translocase subunit SecA of Treponema pallidum (strain Nichols).